The sequence spans 117 residues: Large ribosomal subunit protein bL20 (117 aa).

This sequence belongs to the bacterial ribosomal protein bL20 family.

Its function is as follows. Binds directly to 23S ribosomal RNA and is necessary for the in vitro assembly process of the 50S ribosomal subunit. It is not involved in the protein synthesizing functions of that subunit. This is Large ribosomal subunit protein bL20 from Aliivibrio salmonicida (strain LFI1238) (Vibrio salmonicida (strain LFI1238)).